Consider the following 506-residue polypeptide: D-alanine--D-alanyl carrier protein ligase (506 aa).

152–153 contributes to the ATP binding site; the sequence is TS. D-alanine is bound at residue D197. Position 292 to 297 (292 to 297) interacts with ATP; it reads NTYGPT. V301 serves as a coordination point for D-alanine. ATP contacts are provided by residues D383, 395 to 398, and K494; that span reads YRGR. Position 494 (K494) interacts with D-alanine.

The protein belongs to the ATP-dependent AMP-binding enzyme family. DltA subfamily.

Its subcellular location is the cytoplasm. The enzyme catalyses holo-[D-alanyl-carrier protein] + D-alanine + ATP = D-alanyl-[D-alanyl-carrier protein] + AMP + diphosphate. Its pathway is cell wall biogenesis; lipoteichoic acid biosynthesis. Its function is as follows. Catalyzes the first step in the D-alanylation of lipoteichoic acid (LTA), the activation of D-alanine and its transfer onto the D-alanyl carrier protein (Dcp) DltC. In an ATP-dependent two-step reaction, forms a high energy D-alanyl-AMP intermediate, followed by transfer of the D-alanyl residue as a thiol ester to the phosphopantheinyl prosthetic group of the Dcp. D-alanylation of LTA plays an important role in modulating the properties of the cell wall in Gram-positive bacteria, influencing the net charge of the cell wall. This chain is D-alanine--D-alanyl carrier protein ligase, found in Lacticaseibacillus casei (strain BL23) (Lactobacillus casei).